Consider the following 314-residue polypeptide: MLRIYAPASSANISVGFDTLGVAVSPIDGSLLGDVVQIEEIEQGFELESAGYFVRKLPKEPQKNIVYQAYVLFSERLKLRNLKIKPLRLTLEKNMPIGSGLGSSACSIVAALVALNQFYQQPFSKMELLEMMGELEGRISGSIHYDNVAPCYLGGVQLMVQSLGNICQQLPFFDNWYWVLAYPGIEVSTAEARAILPKSYTRQDVISHGRHLGSFVHACHTRQEALAAYMMRDVIAEPYREALLPNFAEVKQAVKDLGVLASGISGSGPTMFAIAPDLAIATKSATYLENNYLQNNEGFVHICKVDNVGARALV.

Position 96–106 (96–106 (PIGSGLGSSAC)) interacts with ATP.

This sequence belongs to the GHMP kinase family. Homoserine kinase subfamily.

It localises to the cytoplasm. The catalysed reaction is L-homoserine + ATP = O-phospho-L-homoserine + ADP + H(+). Its pathway is amino-acid biosynthesis; L-threonine biosynthesis; L-threonine from L-aspartate: step 4/5. Catalyzes the ATP-dependent phosphorylation of L-homoserine to L-homoserine phosphate. The sequence is that of Homoserine kinase from Histophilus somni (strain 129Pt) (Haemophilus somnus).